Consider the following 241-residue polypeptide: Small ribosomal subunit protein uS2 (241 aa).

This sequence belongs to the universal ribosomal protein uS2 family.

This is Small ribosomal subunit protein uS2 from Salmonella agona (strain SL483).